Reading from the N-terminus, the 242-residue chain is Probable 2-phosphosulfolactate phosphatase (242 aa).

This sequence belongs to the ComB family. Mg(2+) is required as a cofactor.

It carries out the reaction (2R)-O-phospho-3-sulfolactate + H2O = (2R)-3-sulfolactate + phosphate. This chain is Probable 2-phosphosulfolactate phosphatase, found in Parasynechococcus marenigrum (strain WH8102).